Consider the following 260-residue polypeptide: Outer membrane protein assembly factor BamD (260 aa).

The N-terminal stretch at 1-19 is a signal peptide; that stretch reads MRKLKSFTFIALTAFAITA. Residue cysteine 20 is the site of N-palmitoyl cysteine attachment. Residue cysteine 20 is the site of S-diacylglycerol cysteine attachment.

Belongs to the BamD family. Part of the Bam complex.

It localises to the cell outer membrane. In terms of biological role, part of the outer membrane protein assembly complex, which is involved in assembly and insertion of beta-barrel proteins into the outer membrane. The sequence is that of Outer membrane protein assembly factor BamD from Pasteurella multocida (strain Pm70).